The sequence spans 123 residues: Ferredoxin-5 (123 aa).

Residues 2–119 enclose the 2Fe-2S ferredoxin-type domain; it reads PNITFTSPIM…DVMVHFTGTP (118 aa). The [2Fe-2S] cluster site is built by Cys42, Cys47, Cys50, and Cys102.

It belongs to the 2Fe2S plant-type ferredoxin family. Requires [2Fe-2S] cluster as cofactor.

Functionally, ferredoxins are iron-sulfur proteins that transfer electrons in a wide variety of metabolic reactions. This ferredoxin probably participates in nitrogen fixation. The polypeptide is Ferredoxin-5 (fdxD) (Rhodobacter capsulatus (Rhodopseudomonas capsulata)).